The sequence spans 418 residues: Adenylosuccinate synthetase 2 (418 aa).

GTP is bound by residues glycine 12–arginine 18 and glycine 40–threonine 42. Residue aspartate 13 is the Proton acceptor of the active site. 2 residues coordinate Mg(2+): aspartate 13 and glycine 40. IMP contacts are provided by residues aspartate 13–lysine 16, asparagine 38–histidine 41, threonine 127, lysine 141, threonine 239, and arginine 301. Histidine 41 functions as the Proton donor in the catalytic mechanism. Residue alanine 297–arginine 303 participates in substrate binding. Residues arginine 303, lysine 329–aspartate 331, and serine 407–glycine 409 each bind GTP.

Belongs to the adenylosuccinate synthetase family. Homodimer. Mg(2+) serves as cofactor.

It localises to the cytoplasm. It catalyses the reaction IMP + L-aspartate + GTP = N(6)-(1,2-dicarboxyethyl)-AMP + GDP + phosphate + 2 H(+). It functions in the pathway purine metabolism; AMP biosynthesis via de novo pathway; AMP from IMP: step 1/2. Its function is as follows. Plays an important role in the de novo pathway of purine nucleotide biosynthesis. Catalyzes the first committed step in the biosynthesis of AMP from IMP. The sequence is that of Adenylosuccinate synthetase 2 from Pseudoalteromonas translucida (strain TAC 125).